An 835-amino-acid chain; its full sequence is Adhesion G protein-coupled receptor E5 (835 aa).

The signal sequence occupies residues 1 to 20 (MGGRVFLAFCVWLTLPGAET). Topologically, residues 21–552 (QDSRGCARWC…EDWKLTLITR (532 aa)) are extracellular. The region spanning 22-63 (DSRGCARWCPQNSSCVNATACRCNPGFSSFSEIITTPTETCD) is the EGF-like 1 domain. 15 disulfide bridges follow: cysteine 26–cysteine 36, cysteine 30–cysteine 42, cysteine 44–cysteine 62, cysteine 68–cysteine 82, cysteine 76–cysteine 91, cysteine 93–cysteine 114, cysteine 120–cysteine 133, cysteine 127–cysteine 142, cysteine 144–cysteine 158, cysteine 164–cysteine 177, cysteine 171–cysteine 186, cysteine 188–cysteine 207, cysteine 213–cysteine 226, cysteine 220–cysteine 235, and cysteine 237–cysteine 256. N-linked (GlcNAc...) asparagine glycans are attached at residues asparagine 33 and asparagine 38. Residues 64-115 (DINECATPSKVSCGKFSDCWNTEGSYDCVCSPGYEPVSGAKTFKNESENTCQ) enclose the EGF-like 2; calcium-binding domain. Residue asparagine 108 is glycosylated (N-linked (GlcNAc...) asparagine). The 44-residue stretch at 116–159 (DVDECQQNPRLCKSYGTCVNTLGSYTCQCLPGFKFIPEDPKVCT) folds into the EGF-like 3; calcium-binding domain. Positions 160-208 (DVNECTSGQNPCHSSTHCLNNVGSYQCRCRPGWQPIPGSPNGPNNTVCE) constitute an EGF-like 4; calcium-binding domain. A glycan (N-linked (GlcNAc...) asparagine) is linked at asparagine 203. In terms of domain architecture, EGF-like 5; calcium-binding spans 209-257 (DVDECSSGQHQCDSSTVCFNTVGSYSCRCRPGWKPRHGIPNNQKDTVCE). Residues 349 to 543 (PFTYISPSNT…AILMAHYDVE (195 aa)) enclose the GAIN-B domain. Residues asparagine 371, asparagine 406, asparagine 413, asparagine 453, and asparagine 520 are each glycosylated (N-linked (GlcNAc...) asparagine). Cystine bridges form between cysteine 495-cysteine 525 and cysteine 513-cysteine 527. The GPS stretch occupies residues 495-543 (CAFWKSDSDRGGHWATEGCQVLGSKNGSTTCQCSHLSSFAILMAHYDVE). The helical transmembrane segment at 553–572 (VGLALSLFCLLLCILTFLLV) threads the bilayer. Over 573–581 (RPIQGSRTT) the chain is Cytoplasmic. The helical transmembrane segment at 582 to 601 (IHLHLCICLFVGSTIFLAGI) threads the bilayer. Residues 602–620 (ENEGGQVGLRCRLVAGLLH) lie on the Extracellular side of the membrane. A helical membrane pass occupies residues 621–642 (YCFLAAFCWMSLEGLELYFLVV). The Cytoplasmic portion of the chain corresponds to 643 to 653 (RVFQGQGLSTR). Residues 654-674 (WLCLIGYGVPLLIVGVSAAIY) form a helical membrane-spanning segment. Over 675 to 691 (SKGYGRPRYCWLDFEQG) the chain is Extracellular. The chain crosses the membrane as a helical span at residues 692–712 (FLWSFLGPVTFIILCNAVIFV). The Cytoplasmic segment spans residues 713–739 (TTVWKLTQKFSEINPDMKKLKKARALT). The helical transmembrane segment at 740–760 (ITAIAQLFLLGCTWVFGLFIF) threads the bilayer. The Extracellular segment spans residues 761–766 (DDRSLV). Residues 767-789 (LTYVFTILNCLQGAFLYLLHCLL) traverse the membrane as a helical segment. The Cytoplasmic segment spans residues 790–835 (NKKVREEYRKWACLVAGGSKYSEFTSTTSGTGHNQTRALRASESGI). A compositionally biased stretch (polar residues) spans 814–826 (TSTTSGTGHNQTR). The segment at 814–835 (TSTTSGTGHNQTRALRASESGI) is disordered. Serine 815 carries the post-translational modification Phosphoserine. At threonine 816 the chain carries Phosphothreonine. At serine 818 the chain carries Phosphoserine. A Phosphothreonine modification is found at threonine 825. 2 positions are modified to phosphoserine: serine 831 and serine 833.

This sequence belongs to the G-protein coupled receptor 2 family. LN-TM7 subfamily. In terms of assembly, forms a heterodimer, consisting of a large extracellular region (alpha subunit) non-covalently linked to a seven-transmembrane moiety (beta subunit). Interacts with complement decay-accelerating factor (DAF). The largest isoform (isoform 1) interacts with chondroitin sulfate. Post-translationally, proteolytically cleaved into 2 subunits, an extracellular alpha subunit and a seven-transmembrane subunit. As to expression, broadly expressed, found on most hematopoietic cells, including activated lymphocytes, monocytes, macrophages, dendritic cells, and granulocytes. Expressed also abundantly by smooth muscle cells. Expressed in thyroid, colorectal, gastric, esophageal and pancreatic carcinomas too. Expression are increased under inflammatory conditions in the CNS of multiple sclerosis and in synovial tissue of patients with rheumatoid arthritis. Increased expression of CD97 in the synovium is accompanied by detectable levels of soluble CD97 in the synovial fluid.

It localises to the cell membrane. It is found in the secreted. Its subcellular location is the extracellular space. Functionally, receptor potentially involved in both adhesion and signaling processes early after leukocyte activation. Plays an essential role in leukocyte migration. In Homo sapiens (Human), this protein is Adhesion G protein-coupled receptor E5.